We begin with the raw amino-acid sequence, 221 residues long: Probable molybdenum cofactor guanylyltransferase (221 aa).

GTP is bound by residues 17-19 (LAG), lysine 29, aspartate 74, and aspartate 103. A Mg(2+)-binding site is contributed by aspartate 103.

The protein belongs to the MobA family. It depends on Mg(2+) as a cofactor.

The protein localises to the cytoplasm. The catalysed reaction is Mo-molybdopterin + GTP + H(+) = Mo-molybdopterin guanine dinucleotide + diphosphate. In terms of biological role, transfers a GMP moiety from GTP to Mo-molybdopterin (Mo-MPT) cofactor (Moco or molybdenum cofactor) to form Mo-molybdopterin guanine dinucleotide (Mo-MGD) cofactor. In Peptoclostridium acidaminophilum (Eubacterium acidaminophilum), this protein is Probable molybdenum cofactor guanylyltransferase.